Consider the following 96-residue polypeptide: Co-chaperonin GroES (96 aa).

The protein belongs to the GroES chaperonin family. In terms of assembly, heptamer of 7 subunits arranged in a ring. Interacts with the chaperonin GroEL.

It is found in the cytoplasm. In terms of biological role, together with the chaperonin GroEL, plays an essential role in assisting protein folding. The GroEL-GroES system forms a nano-cage that allows encapsulation of the non-native substrate proteins and provides a physical environment optimized to promote and accelerate protein folding. GroES binds to the apical surface of the GroEL ring, thereby capping the opening of the GroEL channel. The chain is Co-chaperonin GroES from Histophilus somni (strain 129Pt) (Haemophilus somnus).